Consider the following 205-residue polypeptide: Thymidine kinase (205 aa).

ATP contacts are provided by residues 9–16 (SAMNAGKS) and 87–90 (DESQ). Residue glutamate 88 is the Proton acceptor of the active site. Cysteine 145, cysteine 147, cysteine 182, and histidine 185 together coordinate Zn(2+).

The protein belongs to the thymidine kinase family. Homotetramer.

It localises to the cytoplasm. The enzyme catalyses thymidine + ATP = dTMP + ADP + H(+). In Salmonella paratyphi A (strain ATCC 9150 / SARB42), this protein is Thymidine kinase.